Here is a 238-residue protein sequence, read N- to C-terminus: MIRLAAFDIDGTLTINRSSTVLCLEAIDALRKLEKNGVIVVLVSSNALPVVVGLKKYIGLSGPAIGETGALIYYGEEEIVATTKYSAKQAYLDVLEKYNEYVYGSWQNMFRLHDYALKIRKQYLSKDNEIYSLIKEYVENKYPYIKVGYSGYAIHLTPKDTGKGKALKQIMEKHGIRREETMGVGDSIMDWEFIKETKIKVAVANADPELRRKADIVTTKPSGYGVVEIVEKILDKPP.

The active-site Nucleophile is Asp-8. 2 residues coordinate Mg(2+): Asp-8 and Asp-10. Substrate is bound at residue Lys-163. Positions 186 and 190 each coordinate Mg(2+).

Belongs to the archaeal SPP-like hydrolase family. It depends on Mg(2+) as a cofactor.

It carries out the reaction 2-phosphoglycolate + H2O = glycolate + phosphate. In terms of biological role, catalyzes the dephosphorylation of 2-phosphoglycolate. This chain is Phosphoglycolate phosphatase, found in Staphylothermus marinus (strain ATCC 43588 / DSM 3639 / JCM 9404 / F1).